Reading from the N-terminus, the 220-residue chain is Thiamine-phosphate synthase (220 aa).

4-amino-2-methyl-5-(diphosphooxymethyl)pyrimidine-binding positions include 39–43 and N80; that span reads QLRDK. The Mg(2+) site is built by D81 and D100. S119 serves as a coordination point for 4-amino-2-methyl-5-(diphosphooxymethyl)pyrimidine. 145-147 provides a ligand contact to 2-[(2R,5Z)-2-carboxy-4-methylthiazol-5(2H)-ylidene]ethyl phosphate; it reads TPT. K148 lines the 4-amino-2-methyl-5-(diphosphooxymethyl)pyrimidine pocket. Residue G176 coordinates 2-[(2R,5Z)-2-carboxy-4-methylthiazol-5(2H)-ylidene]ethyl phosphate.

This sequence belongs to the thiamine-phosphate synthase family. It depends on Mg(2+) as a cofactor.

It catalyses the reaction 2-[(2R,5Z)-2-carboxy-4-methylthiazol-5(2H)-ylidene]ethyl phosphate + 4-amino-2-methyl-5-(diphosphooxymethyl)pyrimidine + 2 H(+) = thiamine phosphate + CO2 + diphosphate. The enzyme catalyses 2-(2-carboxy-4-methylthiazol-5-yl)ethyl phosphate + 4-amino-2-methyl-5-(diphosphooxymethyl)pyrimidine + 2 H(+) = thiamine phosphate + CO2 + diphosphate. The catalysed reaction is 4-methyl-5-(2-phosphooxyethyl)-thiazole + 4-amino-2-methyl-5-(diphosphooxymethyl)pyrimidine + H(+) = thiamine phosphate + diphosphate. The protein operates within cofactor biosynthesis; thiamine diphosphate biosynthesis; thiamine phosphate from 4-amino-2-methyl-5-diphosphomethylpyrimidine and 4-methyl-5-(2-phosphoethyl)-thiazole: step 1/1. Its function is as follows. Condenses 4-methyl-5-(beta-hydroxyethyl)thiazole monophosphate (THZ-P) and 2-methyl-4-amino-5-hydroxymethyl pyrimidine pyrophosphate (HMP-PP) to form thiamine monophosphate (TMP). In Mycobacterium marinum (strain ATCC BAA-535 / M), this protein is Thiamine-phosphate synthase.